The sequence spans 107 residues: Late histone H2B.L4 (107 aa).

Ser94 is a glycosylation site (O-linked (GlcNAc) serine). A Glycyl lysine isopeptide (Lys-Gly) (interchain with G-Cter in ubiquitin) cross-link involves residue Lys102.

The protein belongs to the histone H2B family. The nucleosome is a histone octamer containing two molecules each of H2A, H2B, H3 and H4 assembled in one H3-H4 heterotetramer and two H2A-H2B heterodimers. The octamer wraps approximately 147 bp of DNA. Monoubiquitination gives a specific tag for epigenetic transcriptional activation and is also prerequisite for histone H3 'Lys-4' and 'Lys-79' methylation. Post-translationally, glcNAcylation at Ser-94 promotes monoubiquitination of Lys-102. It fluctuates in response to extracellular glucose, and associates with transcribed genes.

The protein resides in the nucleus. It is found in the chromosome. Functionally, core component of nucleosome. Nucleosomes wrap and compact DNA into chromatin, limiting DNA accessibility to the cellular machineries which require DNA as a template. Histones thereby play a central role in transcription regulation, DNA repair, DNA replication and chromosomal stability. DNA accessibility is regulated via a complex set of post-translational modifications of histones, also called histone code, and nucleosome remodeling. In Strongylocentrotus purpuratus (Purple sea urchin), this protein is Late histone H2B.L4.